A 156-amino-acid polypeptide reads, in one-letter code: Cyanate hydratase (156 aa).

Residues arginine 96, glutamate 99, and serine 122 contribute to the active site.

It belongs to the cyanase family.

The enzyme catalyses cyanate + hydrogencarbonate + 3 H(+) = NH4(+) + 2 CO2. In terms of biological role, catalyzes the reaction of cyanate with bicarbonate to produce ammonia and carbon dioxide. The sequence is that of Cyanate hydratase from Burkholderia thailandensis (strain ATCC 700388 / DSM 13276 / CCUG 48851 / CIP 106301 / E264).